Consider the following 281-residue polypeptide: Digeranylgeranylglyceryl phosphate synthase (281 aa).

A run of 8 helical transmembrane segments spans residues 7-27 (ILRPVNAVMAVITVMLMALIT), 32-52 (FSVLLASVVVFTATGAGNVIN), 72-91 (GRISRGVAGVYSIILFALAS), 95-117 (FYLGLLPGLVVVSSSLLMVYYAW), 128-148 (ITISFLTGLSFVFGGIVLGEV), 193-213 (ISGVLAASFMLIASLTSPSLY), 214-234 (LLGIFSALYIPVLLLAVAVFL), and 258-278 (VGMALTFIAFAAGSGTITALT).

The protein belongs to the UbiA prenyltransferase family. DGGGP synthase subfamily. Requires Mg(2+) as cofactor.

The protein resides in the cell membrane. The enzyme catalyses sn-3-O-(geranylgeranyl)glycerol 1-phosphate + (2E,6E,10E)-geranylgeranyl diphosphate = 2,3-bis-O-(geranylgeranyl)-sn-glycerol 1-phosphate + diphosphate. It participates in membrane lipid metabolism; glycerophospholipid metabolism. Prenyltransferase that catalyzes the transfer of the geranylgeranyl moiety of geranylgeranyl diphosphate (GGPP) to the C2 hydroxyl of (S)-3-O-geranylgeranylglyceryl phosphate (GGGP). This reaction is the second ether-bond-formation step in the biosynthesis of archaeal membrane lipids. This chain is Digeranylgeranylglyceryl phosphate synthase, found in Methanothermobacter thermautotrophicus (strain ATCC 29096 / DSM 1053 / JCM 10044 / NBRC 100330 / Delta H) (Methanobacterium thermoautotrophicum).